Consider the following 267-residue polypeptide: Trehalose 2-sulfotransferase (267 aa).

Alpha,alpha-trehalose-binding positions include glutamine 14, 33–39 (EPQEFFQ), proline 48, and tryptophan 53. Glutamate 36 serves as the catalytic Proton acceptor.

It belongs to the Stf0 sulfotransferase family. Homodimer.

The catalysed reaction is alpha,alpha-trehalose + 3'-phosphoadenylyl sulfate = 2-O-sulfo-alpha,alpha-trehalose + adenosine 3',5'-bisphosphate + H(+). It functions in the pathway glycolipid metabolism. Its function is as follows. Catalyzes the sulfuryl group transfer from 3'-phosphoadenosine-5'-phosphosulfate (PAPS) to trehalose, leading to trehalose-2-sulfate (T2S). The sulfation of trehalose is the first step in the biosynthesis of sulfolipid-1 (SL-1), a major cell wall glycolipid and the most abundant sulfated metabolite found in Mycobacterium tuberculosis, that is a potential virulence factor thought to mediate host-pathogen interactions. The sequence is that of Trehalose 2-sulfotransferase from Mycobacterium tuberculosis (strain ATCC 35801 / TMC 107 / Erdman).